Consider the following 108-residue polypeptide: UPF0060 membrane protein YnfA (108 aa).

The Periplasmic segment spans residues methionine 1 to threonine 5. Residues leucine 6–leucine 26 form a helical membrane-spanning segment. At lysine 27–alanine 30 the chain is on the cytoplasmic side. A helical membrane pass occupies residues serine 31–leucine 51. Residues histidine 52–tyrosine 60 lie on the Periplasmic side of the membrane. A helical transmembrane segment spans residues alanine 61–valine 81. Topologically, residues lysine 82 to serine 84 are cytoplasmic. The helical transmembrane segment at leucine 85–tryptophan 105 threads the bilayer. At glycine 106–threonine 108 the chain is on the periplasmic side.

It belongs to the UPF0060 family.

The protein resides in the cell inner membrane. The polypeptide is UPF0060 membrane protein YnfA (Escherichia coli (strain SMS-3-5 / SECEC)).